The following is a 385-amino-acid chain: Nonsense-mediated mRNA decay factor SMG9 (385 aa).

Positions 1 to 32 (MKKVEILKTSRPSSAGGAARPSTASPTHGAPK) are disordered.

The protein belongs to the SMG9 family.

In terms of biological role, involved in nonsense-mediated decay (NMD) of mRNAs containing premature stop codons. Probable component of kinase complex containing smg-1 and recruited to stalled ribosomes. The chain is Nonsense-mediated mRNA decay factor SMG9 (smg-9) from Caenorhabditis elegans.